Consider the following 22-residue polypeptide: FLGSIIGALAKGLPSLIALIKK.

Position 22 is a lysine amide (Lys-22).

Expressed by the skin glands.

It is found in the secreted. Functionally, antimicrobial peptide. The chain is Brevinin-1OKd from Nidirana okinavana (Kampira Falls frog).